The following is a 203-amino-acid chain: Probable cytochrome c oxidase subunit 3 (203 aa).

5 helical membrane passes run 30–50 (IVWL…YFSA), 71–91 (VPVT…VFAA), 96–116 (IFGL…FVLG), 143–163 (ATGF…FLLV), and 179–199 (IVVS…FTVI).

Belongs to the cytochrome c oxidase subunit 3 family.

It is found in the cell membrane. The catalysed reaction is 4 Fe(II)-[cytochrome c] + O2 + 8 H(+)(in) = 4 Fe(III)-[cytochrome c] + 2 H2O + 4 H(+)(out). This is Probable cytochrome c oxidase subunit 3 (ctaE) from Mycobacterium bovis (strain ATCC BAA-935 / AF2122/97).